The sequence spans 119 residues: Probable prefoldin subunit 6 (119 aa).

It belongs to the prefoldin subunit beta family. As to quaternary structure, heterohexamer of two PFD-alpha type and four PFD-beta type subunits. May interact with MSP1.

Binds specifically to cytosolic chaperonin (c-CPN) and transfers target proteins to it. Binds to nascent polypeptide chain and promotes folding in an environment in which there are many competing pathways for nonnative proteins. The sequence is that of Probable prefoldin subunit 6 from Plasmodium falciparum (isolate 3D7).